Consider the following 358-residue polypeptide: Methionine import ATP-binding protein MetN (358 aa).

Positions 14–255 (VVFDAVSKRF…SRHETTRALL (242 aa)) constitute an ABC transporter domain. ATP is bound at residue 52-59 (GRSGAGKS).

Belongs to the ABC transporter superfamily. Methionine importer (TC 3.A.1.24) family. In terms of assembly, the complex is composed of two ATP-binding proteins (MetN), two transmembrane proteins (MetI) and a solute-binding protein (MetQ).

It localises to the cell inner membrane. The catalysed reaction is L-methionine(out) + ATP + H2O = L-methionine(in) + ADP + phosphate + H(+). It catalyses the reaction D-methionine(out) + ATP + H2O = D-methionine(in) + ADP + phosphate + H(+). In terms of biological role, part of the ABC transporter complex MetNIQ involved in methionine import. Responsible for energy coupling to the transport system. In Rhizobium meliloti (strain 1021) (Ensifer meliloti), this protein is Methionine import ATP-binding protein MetN.